A 441-amino-acid polypeptide reads, in one-letter code: Arginine biosynthesis bifunctional protein ArgJ, mitochondrial (441 aa).

The transit peptide at 1-8 directs the protein to the mitochondrion; it reads MRISSTLL. Thr177, Lys204, Thr215, Glu301, Asn436, and Ser441 together coordinate substrate. The active-site Nucleophile is Thr215.

The protein belongs to the ArgJ family. In terms of assembly, heterodimer of an alpha and a beta chain. Post-translationally, the alpha and beta chains are autoproteolytically processed from a single precursor protein within the mitochondrion.

The protein localises to the mitochondrion matrix. It catalyses the reaction N(2)-acetyl-L-ornithine + L-glutamate = N-acetyl-L-glutamate + L-ornithine. The catalysed reaction is L-glutamate + acetyl-CoA = N-acetyl-L-glutamate + CoA + H(+). Its pathway is amino-acid biosynthesis; L-arginine biosynthesis; L-ornithine and N-acetyl-L-glutamate from L-glutamate and N(2)-acetyl-L-ornithine (cyclic): step 1/1. The protein operates within amino-acid biosynthesis; L-arginine biosynthesis; N(2)-acetyl-L-ornithine from L-glutamate: step 1/4. Its function is as follows. Catalyzes two activities which are involved in the cyclic version of arginine biosynthesis: the synthesis of acetylglutamate from glutamate and acetyl-CoA, and of ornithine by transacetylation between acetylornithine and glutamate. The chain is Arginine biosynthesis bifunctional protein ArgJ, mitochondrial from Saccharomyces cerevisiae (strain Lalvin EC1118 / Prise de mousse) (Baker's yeast).